A 718-amino-acid chain; its full sequence is Receptor-like protein 36 (718 aa).

The first 26 residues, 1–26 (MIRSLSYCFLTIYFFLSILPLPNTIA), serve as a signal peptide directing secretion. Residues 27-695 (CPTRLLCRSD…SESEDQLLNW (669 aa)) are Extracellular-facing. LRR repeat units lie at residues 70 to 94 (DAIL…IGNL), 95 to 118 (SHLT…IGNL), 120 to 141 (QLES…SFAN), 143 to 165 (TKLS…LANL), 166 to 188 (TSLS…DLSG), 189 to 213 (LHNL…LLMI), 214 to 238 (PSLV…TFSL), 239 to 261 (SRLR…SISK), 262 to 286 (LVNL…ISKV), 288 to 310 (NLTS…VWRS), 312 to 334 (KLDY…EVID), 335 to 359 (GASL…ICKV), 360 to 383 (KDLY…LKYS), 384 to 406 (TYFH…LFIK), 407 to 431 (DSQL…LINC), 433 to 454 (RIEF…WLGS), 455 to 480 (LPYL…AYLG), and 481 to 505 (FPSI…YFAN). The N-linked (GlcNAc...) asparagine glycan is linked to asparagine 93. Residues asparagine 141 and asparagine 164 are each glycosylated (N-linked (GlcNAc...) asparagine). A glycan (N-linked (GlcNAc...) asparagine) is linked at asparagine 199. Asparagine 288 carries an N-linked (GlcNAc...) asparagine glycan. N-linked (GlcNAc...) asparagine glycans are attached at residues asparagine 373 and asparagine 393. Asparagine 528 is a glycosylation site (N-linked (GlcNAc...) asparagine). 4 LRR repeats span residues 550 to 574 (FEGF…IGLL), 575 to 598 (SELR…LANI), 599 to 622 (TNLE…LGKL), and 624 to 647 (FLSN…QFAT). Asparagine 581, asparagine 597, asparagine 610, asparagine 629, and asparagine 649 each carry an N-linked (GlcNAc...) asparagine glycan. Residues 696-716 (IAAAIAFGPGMFCGLVIGHIF) form a helical membrane-spanning segment. The Cytoplasmic portion of the chain corresponds to 717–718 (TS).

It belongs to the RLP family.

Its subcellular location is the cell membrane. The protein is Receptor-like protein 36 of Arabidopsis thaliana (Mouse-ear cress).